The chain runs to 362 residues: Serpentine receptor class epsilon-37 (362 aa).

7 consecutive transmembrane segments (helical) span residues 29-49 (IFYV…YILV), 67-87 (IMMC…IVLI), 127-147 (IYFA…AVLA), 170-190 (IPIL…YQTT), 204-224 (IFIG…NLAW), 260-280 (LVVS…VLLF), and 288-308 (FFVH…SLTL).

This sequence belongs to the nematode receptor-like protein sre family.

The protein resides in the membrane. The chain is Serpentine receptor class epsilon-37 (sre-37) from Caenorhabditis elegans.